Consider the following 885-residue polypeptide: Pyruvate, phosphate dikinase (885 aa).

The segment at Met1–Lys342 is N-terminal. Arg91 is a binding site for ATP. Residues Met343–Ser399 are linker 1. The interval Pro400–Ile497 is central. The active-site Tele-phosphohistidine intermediate is His454. The linker 2 stretch occupies residues Asp498–Lys533. A C-terminal region spans residues Ile534–Asn885. 7 residues coordinate substrate: Arg561, Arg617, Glu752, Gly773, Thr774, Asn775, and Asp776. Position 752 (Glu752) interacts with Mg(2+). A Mg(2+)-binding site is contributed by Asp776. The active-site Proton donor is Cys839.

It belongs to the PEP-utilizing enzyme family. As to quaternary structure, homodimer. Requires Mg(2+) as cofactor.

The enzyme catalyses pyruvate + phosphate + ATP = phosphoenolpyruvate + AMP + diphosphate + H(+). Functionally, catalyzes the dephosphorylation of phosphoenolpyruvate and diphosphate to produce ATP. This chain is Pyruvate, phosphate dikinase, found in Entamoeba histolytica (strain ATCC 30459 / HM-1:IMSS / ABRM).